A 124-amino-acid polypeptide reads, in one-letter code: CRISPR-associated endoribonuclease Cas2 4 (124 aa).

Aspartate 40 lines the Mg(2+) pocket.

It belongs to the CRISPR-associated endoribonuclease Cas2 protein family. In terms of assembly, homodimer, forms a heterotetramer with a Cas1 homodimer. It depends on Mg(2+) as a cofactor.

Its function is as follows. CRISPR (clustered regularly interspaced short palindromic repeat), is an adaptive immune system that provides protection against mobile genetic elements (viruses, transposable elements and conjugative plasmids). CRISPR clusters contain sequences complementary to antecedent mobile elements and target invading nucleic acids. CRISPR clusters are transcribed and processed into CRISPR RNA (crRNA). Functions as a ssRNA-specific endoribonuclease. Involved in the integration of spacer DNA into the CRISPR cassette. The protein is CRISPR-associated endoribonuclease Cas2 4 of Rhodospirillum rubrum (strain ATCC 11170 / ATH 1.1.1 / DSM 467 / LMG 4362 / NCIMB 8255 / S1).